The sequence spans 299 residues: 33 kDa chaperonin (299 aa).

Disulfide bonds link cysteine 238–cysteine 240 and cysteine 271–cysteine 274.

It belongs to the HSP33 family. In terms of processing, under oxidizing conditions two disulfide bonds are formed involving the reactive cysteines. Under reducing conditions zinc is bound to the reactive cysteines and the protein is inactive.

The protein resides in the cytoplasm. Redox regulated molecular chaperone. Protects both thermally unfolding and oxidatively damaged proteins from irreversible aggregation. Plays an important role in the bacterial defense system toward oxidative stress. The protein is 33 kDa chaperonin of Alkaliphilus oremlandii (strain OhILAs) (Clostridium oremlandii (strain OhILAs)).